Here is a 108-residue protein sequence, read N- to C-terminus: DIQMTQTTSSLSASLGDRVTISCSASQSIGNYLBWYQQKPDGTVKLLIYYTSSLHSGVPSRFSGSGSGTDYSLTISBLZPZBIATYYCQQYSKLPRTFGGGTKLEIKR.

The interval D1–C23 is framework-1. Residues C23 and C88 are joined by a disulfide bond. A complementarity-determining-1 region spans residues S24–B34. A framework-2 region spans residues W35–Y49. The complementarity-determining-2 stretch occupies residues Y50 to S56. A framework-3 region spans residues G57 to C88. The interval Q89–T97 is complementarity-determining-3. Residues F98–R108 form a framework-4 region.

This chain is Ig kappa chain V-V region MOPC 173, found in Mus musculus (Mouse).